The primary structure comprises 497 residues: Zinc metalloproteinase nas-28 (497 aa).

The signal sequence occupies residues Met-1–Gly-14. Residues Ala-15–Arg-120 constitute a propeptide that is removed on maturation. Asn-76 carries N-linked (GlcNAc...) asparagine glycosylation. Residues Gln-121–Thr-319 form the Peptidase M12A domain. 7 cysteine pairs are disulfide-bonded: Cys-164–Cys-318, Cys-185–Cys-206, Cys-328–Cys-339, Cys-331–Cys-342, Cys-344–Cys-353, Cys-364–Cys-398, and Cys-427–Cys-447. His-214 is a binding site for Zn(2+). Glu-215 is an active-site residue. His-218 and His-224 together coordinate Zn(2+). Asn-317 is a glycosylation site (N-linked (GlcNAc...) asparagine). The EGF-like domain occupies Ile-324–Asp-354. A CUB domain is found at Cys-364 to Val-483. Asn-394 is a glycosylation site (N-linked (GlcNAc...) asparagine).

The cofactor is Zn(2+).

The protein resides in the secreted. Its function is as follows. Metalloprotease. The sequence is that of Zinc metalloproteinase nas-28 (nas-28) from Caenorhabditis elegans.